The following is a 287-amino-acid chain: tRNA pseudouridine synthase B (287 aa).

Catalysis depends on Asp38, which acts as the Nucleophile.

Belongs to the pseudouridine synthase TruB family. Type 1 subfamily.

The enzyme catalyses uridine(55) in tRNA = pseudouridine(55) in tRNA. Its function is as follows. Responsible for synthesis of pseudouridine from uracil-55 in the psi GC loop of transfer RNAs. The polypeptide is tRNA pseudouridine synthase B (Fusobacterium nucleatum subsp. nucleatum (strain ATCC 25586 / DSM 15643 / BCRC 10681 / CIP 101130 / JCM 8532 / KCTC 2640 / LMG 13131 / VPI 4355)).